A 306-amino-acid chain; its full sequence is Pantothenate kinase (306 aa).

An ATP-binding site is contributed by 91–98 (GSVAVGKS).

It belongs to the prokaryotic pantothenate kinase family.

The protein localises to the cytoplasm. The enzyme catalyses (R)-pantothenate + ATP = (R)-4'-phosphopantothenate + ADP + H(+). It participates in cofactor biosynthesis; coenzyme A biosynthesis; CoA from (R)-pantothenate: step 1/5. The polypeptide is Pantothenate kinase (Streptococcus pneumoniae (strain JJA)).